The primary structure comprises 308 residues: MGVPAVPEASSPRWGTLLLAIFLAASRGLVAAFKVTTPYSLYVCPEGQNATLTCRILGPVSKGHDVTIYKTWYLSSRGEVQMCKEHRPIRNFTLQHLQHHGSHLKANASHDQPQKHGLELASDHHGNFSITLRNVTPRDSGLYCCLVIELKNHHPEQRFYGSMELQVQAGKGSGSTCMASNEQDSDSITAAALATGACIVGILCLPLILLLVYKQRQVASHRRAQELVRMDSNTQGIENPGFETTPPFQGMPEAKTRPPLSYVAQRQPSESGRYLLSDPSTPLSPPGPGDVFFPSLDPVPDSPNSEAI.

The signal sequence occupies residues 1–32 (MGVPAVPEASSPRWGTLLLAIFLAASRGLVAA). Residues 33–167 (FKVTTPYSLY…RFYGSMELQV (135 aa)) form the Ig-like V-type domain. The Extracellular portion of the chain corresponds to 33–191 (FKVTTPYSLY…EQDSDSITAA (159 aa)). N49, N91, and N127 each carry an N-linked (GlcNAc...) asparagine glycan. C54 and C145 are oxidised to a cystine. A helical membrane pass occupies residues 192 to 212 (ALATGACIVGILCLPLILLLV). The Cytoplasmic portion of the chain corresponds to 213–308 (YKQRQVASHR…VPDSPNSEAI (96 aa)). A disordered region spans residues 230–308 (MDSNTQGIEN…VPDSPNSEAI (79 aa)). The residue at position 232 (S232) is a Phosphoserine.

Post-translationally, at the cell surface, may be cleaved by MMP14. In terms of processing, N-glycosylated. As to expression, expressed in spleen, thymus, bone marrow, lymph node, and in T-cells within the lamina propria of the small intestine. Detected on CD4+ and CD8+ T-cells, bone marrow-derived dendritic cells (BMDCs), peritoneal macrophages, neutrophils, and natural killer (NK) cells. In spleen and lymph nodes, highly expressed on CD4+ T-cell populations, and at lower levels on CD8+ T-cells. In thymus, has low expression on CD4+ cells and CD8+ cells, and not detected on CD4+CD8+ cells. Expressed in splenic and peritoneal CD11b cells. Not detected in most B cells and NK cells (at protein level). Also detected at lower levels in non-hematopoeitic tissues such as heart, brain, lung, kidney, muscle, ovary, and testis.

The protein localises to the cell membrane. Immunoregulatory receptor which inhibits the T-cell response. May promote differentiation of embryonic stem cells, by inhibiting BMP4 signaling. May stimulate MMP14-mediated MMP2 activation. The polypeptide is V-type immunoglobulin domain-containing suppressor of T-cell activation (Mus musculus (Mouse)).